A 564-amino-acid chain; its full sequence is Solute carrier family 22 member 21 (564 aa).

Residues 1–20 lie on the Cytoplasmic side of the membrane; the sequence is MLDYDEVTAFLGEWGTFQRL. The chain crosses the membrane as a helical span at residues 21 to 41; sequence IFFLLSASIIPNGFTGLSAVF. Residues 42–142 are Extracellular-facing; it reads LTAIPEHRCR…DLVCKDDWKA (101 aa). 3 N-linked (GlcNAc...) asparagine glycosylation sites follow: N57, N64, and N91. The helical transmembrane segment at 143–163 threads the bilayer; the sequence is PLTTSFFYVGVLLGSFISGQL. Topologically, residues 164 to 172 are cytoplasmic; that stretch reads SDRFGRKNI. Residues 173-193 traverse the membrane as a helical segment; that stretch reads LFLTMAMHTGFSFIQVFSVNF. Over 194–197 the chain is Extracellular; it reads EMFT. A helical membrane pass occupies residues 198 to 218; that stretch reads LLYTLVGMGHISNYVAAFVLG. 218–225 contributes to the ATP binding site; it reads GTEMLSKS. Topologically, residues 219 to 232 are cytoplasmic; it reads TEMLSKSVRIIFAT. A helical transmembrane segment spans residues 233–253; that stretch reads LGVCIFFAFGFMVLPLFAYFI. Over 254–257 the chain is Extracellular; that stretch reads REWR. The chain crosses the membrane as a helical span at residues 258 to 278; it reads RLLLAITLPGVLCGALWWFIP. The Cytoplasmic portion of the chain corresponds to 279–344; the sequence is ESPRWLISQG…YDLVRTPNIR (66 aa). A helical membrane pass occupies residues 345–365; that stretch reads ILTIMSIILWLTISVGYFGLS. Topologically, residues 366-376 are extracellular; it reads LDTPNLNGNIY. Residues 377 to 397 form a helical membrane-spanning segment; the sequence is VNCFLLAAVEVPAYVLAWLLL. Over 398 to 409 the chain is Cytoplasmic; sequence QHVSRRYSMAGS. Residues 410-430 form a helical membrane-spanning segment; sequence LFLGGSVLLLVQLVPSDLHYL. Topologically, residues 431-433 are extracellular; the sequence is STT. A helical membrane pass occupies residues 434–454; sequence LVMVGKFGITSAYSMVYVYTA. At 455–465 the chain is on the cytoplasmic side; sequence ELYPTVVRNMG. A helical transmembrane segment spans residues 466–486; the sequence is VGVSSTASRLGSILSPYFVYL. Over 487-491 the chain is Extracellular; sequence GAYDR. Residues 492 to 512 form a helical membrane-spanning segment; sequence RLPYILMGSLTILTAIITLFF. The Cytoplasmic segment spans residues 513–564; the sequence is PESSGVSLPETIDEMQKVKKLKQRQSLSKKGSPKESKGNVSRTSRTSEPKGF. Residues 532–564 form a disordered region; it reads KLKQRQSLSKKGSPKESKGNVSRTSRTSEPKGF.

Belongs to the major facilitator (TC 2.A.1) superfamily. Organic cation transporter (TC 2.A.1.19) family. In terms of tissue distribution, predominantly expressed in testis.

Its subcellular location is the peroxisome membrane. In terms of biological role, sodium-ion independent, medium affinity carnitine transporter. Also transports organic cations such as tetraethylammonium (TEA) without the involvement of sodium. Relative uptake activity ratio of carnitine to TEA is 746. The chain is Solute carrier family 22 member 21 (Slc22a21) from Mus musculus (Mouse).